The following is a 654-amino-acid chain: NADPH-dependent diflavin oxidoreductase 1 (654 aa).

Over residues 1-10 (MSGSQSSGSP) the composition is skewed to low complexity. The disordered stretch occupies residues 1–22 (MSGSQSSGSPGSPGPPGPPGRS). In terms of domain architecture, Flavodoxin-like spans 23 to 167 (ALVVYGSETG…TFIPWLAGFR (145 aa)). FMN contacts are provided by residues 29 to 34 (SETGNA), 76 to 79 (STTG), and 114 to 123 (LGDSSYPKFN). The 251-residue stretch at 235-485 (HDSLTATLVQ…QLQRGGLNSS (251 aa)) folds into the FAD-binding FR-type domain. Residues Arg389, 419–422 (RQFS), and 458–461 (GVCT) each bind FAD. NADP(+) is bound by residues Thr500, 568–569 (SR), and 574–578 (KVYVQ). Trp654 is a binding site for FAD.

It belongs to the NADPH-dependent diflavin oxidoreductase NDOR1 family. This sequence in the N-terminal section; belongs to the flavodoxin family. In the C-terminal section; belongs to the flavoprotein pyridine nucleotide cytochrome reductase family. In terms of assembly, interacts with dre2; as part of the cytosolic iron-sulfur (Fe-S) protein assembly (CIA) machinery. It depends on FAD as a cofactor. The cofactor is FMN.

It is found in the cytoplasm. It localises to the mitochondrion. It carries out the reaction 2 oxidized [2Fe-2S]-[protein] + NADPH = 2 reduced [2Fe-2S]-[protein] + NADP(+) + H(+). Its function is as follows. NADPH-dependent reductase which is a central component of the cytosolic iron-sulfur (Fe-S) protein assembly (CIA) machinery. Transfers electrons from NADPH via its FAD and FMN prosthetic groups to the [2Fe-2S] cluster of dre2, another key component of the CIA machinery. In turn, this reduced cluster provides electrons for assembly of cytosolic iron-sulfur cluster proteins. Positively controls H(2)O(2)-induced cell death. This chain is NADPH-dependent diflavin oxidoreductase 1, found in Emericella nidulans (strain FGSC A4 / ATCC 38163 / CBS 112.46 / NRRL 194 / M139) (Aspergillus nidulans).